The primary structure comprises 354 residues: UDP-N-acetylglucosamine--N-acetylmuramyl-(pentapeptide) pyrophosphoryl-undecaprenol N-acetylglucosamine transferase 1 (354 aa).

UDP-N-acetyl-alpha-D-glucosamine contacts are provided by residues 12–14 (TAG), Arg163, Ser193, and Gln287.

It belongs to the glycosyltransferase 28 family. MurG subfamily.

The protein resides in the cell membrane. It carries out the reaction di-trans,octa-cis-undecaprenyl diphospho-N-acetyl-alpha-D-muramoyl-L-alanyl-D-glutamyl-meso-2,6-diaminopimeloyl-D-alanyl-D-alanine + UDP-N-acetyl-alpha-D-glucosamine = di-trans,octa-cis-undecaprenyl diphospho-[N-acetyl-alpha-D-glucosaminyl-(1-&gt;4)]-N-acetyl-alpha-D-muramoyl-L-alanyl-D-glutamyl-meso-2,6-diaminopimeloyl-D-alanyl-D-alanine + UDP + H(+). It participates in cell wall biogenesis; peptidoglycan biosynthesis. In terms of biological role, cell wall formation. Catalyzes the transfer of a GlcNAc subunit on undecaprenyl-pyrophosphoryl-MurNAc-pentapeptide (lipid intermediate I) to form undecaprenyl-pyrophosphoryl-MurNAc-(pentapeptide)GlcNAc (lipid intermediate II). The chain is UDP-N-acetylglucosamine--N-acetylmuramyl-(pentapeptide) pyrophosphoryl-undecaprenol N-acetylglucosamine transferase 1 from Bacillus thuringiensis (strain Al Hakam).